The chain runs to 435 residues: Serine--tRNA ligase (435 aa).

242–244 (TAE) serves as a coordination point for L-serine. ATP is bound at residue 273-275 (RSE). Position 296 (Glu296) interacts with L-serine. 360–363 (EISS) serves as a coordination point for ATP. Position 396 (Ser396) interacts with L-serine.

It belongs to the class-II aminoacyl-tRNA synthetase family. Type-1 seryl-tRNA synthetase subfamily. As to quaternary structure, homodimer. The tRNA molecule binds across the dimer.

The protein resides in the cytoplasm. The enzyme catalyses tRNA(Ser) + L-serine + ATP = L-seryl-tRNA(Ser) + AMP + diphosphate + H(+). The catalysed reaction is tRNA(Sec) + L-serine + ATP = L-seryl-tRNA(Sec) + AMP + diphosphate + H(+). Its pathway is aminoacyl-tRNA biosynthesis; selenocysteinyl-tRNA(Sec) biosynthesis; L-seryl-tRNA(Sec) from L-serine and tRNA(Sec): step 1/1. In terms of biological role, catalyzes the attachment of serine to tRNA(Ser). Is also able to aminoacylate tRNA(Sec) with serine, to form the misacylated tRNA L-seryl-tRNA(Sec), which will be further converted into selenocysteinyl-tRNA(Sec). In Vibrio parahaemolyticus serotype O3:K6 (strain RIMD 2210633), this protein is Serine--tRNA ligase.